A 139-amino-acid chain; its full sequence is Ribulose bisphosphate carboxylase small subunit (139 aa).

The protein belongs to the RuBisCO small chain family. As to quaternary structure, heterohexadecamer of 8 large and 8 small subunits.

It localises to the plastid. The protein resides in the chloroplast. Functionally, ruBisCO catalyzes two reactions: the carboxylation of D-ribulose 1,5-bisphosphate, the primary event in carbon dioxide fixation, as well as the oxidative fragmentation of the pentose substrate in the photorespiration process. Both reactions occur simultaneously and in competition at the same active site. Although the small subunit is not catalytic it is essential for maximal activity. The protein is Ribulose bisphosphate carboxylase small subunit of Guillardia theta (Cryptophyte).